The following is a 280-amino-acid chain: Nitrogenase iron-iron protein alpha chain (280 aa).

Residues cysteine 5, cysteine 31, and cysteine 94 each coordinate [8Fe-7S] cluster. Cysteine 213 is a binding site for [8Fe-9S-C-homocitryl] cluster.

This sequence belongs to the NifD/NifK/NifE/NifN family. Hexamer of two alpha, two beta, and two delta chains. The cofactor is [8Fe-7S] cluster. It depends on [8Fe-9S-C-homocitryl] cluster as a cofactor.

It catalyses the reaction N2 + 8 reduced [2Fe-2S]-[ferredoxin] + 16 ATP + 16 H2O = H2 + 8 oxidized [2Fe-2S]-[ferredoxin] + 2 NH4(+) + 16 ADP + 16 phosphate + 6 H(+). Functionally, this iron-iron protein is part of the nitrogenase complex that catalyzes the key enzymatic reactions in nitrogen fixation. Other nitrogenase complexes utilize a molybdenum-iron protein or a vanadium-iron protein. This is Nitrogenase iron-iron protein alpha chain (anfD) from Heliomicrobium gestii (Heliobacterium gestii).